Reading from the N-terminus, the 27-residue chain is Cupiennin-3c (27 aa).

As to expression, expressed by the venom gland.

Its subcellular location is the secreted. This chain is Cupiennin-3c, found in Cupiennius salei (American wandering spider).